The sequence spans 90 residues: Phosphocarrier protein NPr (90 aa).

Residues 2–90 enclose the HPr domain; the sequence is TQYRRVAIKN…ALFESGFDED (89 aa). H16 functions as the Pros-phosphohistidine intermediate in the catalytic mechanism.

It belongs to the HPr family.

The protein resides in the cytoplasm. Functionally, component of the phosphoenolpyruvate-dependent nitrogen-metabolic phosphotransferase system (nitrogen-metabolic PTS), that seems to be involved in regulating nitrogen metabolism. The phosphoryl group from phosphoenolpyruvate (PEP) is transferred to the phosphoryl carrier protein NPr by enzyme I-Ntr. Phospho-NPr then transfers it to EIIA-Ntr. Could function in the transcriptional regulation of sigma-54 dependent operons in conjunction with the NPr (PtsO) and EIIA-Ntr (PtsN) proteins. In Proteus mirabilis (strain HI4320), this protein is Phosphocarrier protein NPr (ptsO).